A 490-amino-acid polypeptide reads, in one-letter code: uncharacterized protein (490 aa).

A helical transmembrane segment spans residues V27–I47.

The protein localises to the membrane. This is an uncharacterized protein from Borreliella burgdorferi (strain ATCC 35210 / DSM 4680 / CIP 102532 / B31) (Borrelia burgdorferi).